Here is a 60-residue protein sequence, read N- to C-terminus: Large ribosomal subunit protein uL30 (60 aa).

The protein belongs to the universal ribosomal protein uL30 family. Part of the 50S ribosomal subunit.

The polypeptide is Large ribosomal subunit protein uL30 (Leifsonia xyli subsp. xyli (strain CTCB07)).